Consider the following 254-residue polypeptide: tRNA (guanine-N(1)-)-methyltransferase (254 aa).

Residues Gly113 and 133 to 138 (LGDFVL) each bind S-adenosyl-L-methionine.

Belongs to the RNA methyltransferase TrmD family. In terms of assembly, homodimer.

The protein resides in the cytoplasm. The catalysed reaction is guanosine(37) in tRNA + S-adenosyl-L-methionine = N(1)-methylguanosine(37) in tRNA + S-adenosyl-L-homocysteine + H(+). In terms of biological role, specifically methylates guanosine-37 in various tRNAs. The polypeptide is tRNA (guanine-N(1)-)-methyltransferase (Herpetosiphon aurantiacus (strain ATCC 23779 / DSM 785 / 114-95)).